The primary structure comprises 182 residues: Ribosome maturation factor RimP (182 aa).

The protein belongs to the RimP family.

The protein resides in the cytoplasm. In terms of biological role, required for maturation of 30S ribosomal subunits. This is Ribosome maturation factor RimP from Corynebacterium efficiens (strain DSM 44549 / YS-314 / AJ 12310 / JCM 11189 / NBRC 100395).